Reading from the N-terminus, the 164-residue chain is C-phycoerythrin alpha chain (164 aa).

Positions 82 and 139 each coordinate (2R,3E)-phycoerythrobilin.

Belongs to the phycobiliprotein family. As to quaternary structure, heterodimer of an alpha and a beta chain. In terms of processing, contains two covalently linked bilin chromophores.

The protein localises to the cellular thylakoid membrane. In terms of biological role, light-harvesting photosynthetic bile pigment-protein from the phycobiliprotein complex. This chain is C-phycoerythrin alpha chain (cpeA), found in Synechocystis sp. (strain PCC 6701).